A 193-amino-acid chain; its full sequence is Ribosome maturation factor RimM (193 aa).

Residues 100 to 173 (DDEFYYADLE…TLLIDPLAAG (74 aa)) form the PRC barrel domain.

Belongs to the RimM family. Binds ribosomal protein uS19.

It is found in the cytoplasm. An accessory protein needed during the final step in the assembly of 30S ribosomal subunit, possibly for assembly of the head region. Essential for efficient processing of 16S rRNA. May be needed both before and after RbfA during the maturation of 16S rRNA. It has affinity for free ribosomal 30S subunits but not for 70S ribosomes. In Rhizobium etli (strain CIAT 652), this protein is Ribosome maturation factor RimM.